A 232-amino-acid polypeptide reads, in one-letter code: Large ribosomal subunit protein uL1 (232 aa).

This sequence belongs to the universal ribosomal protein uL1 family. Part of the 50S ribosomal subunit.

In terms of biological role, binds directly to 23S rRNA. The L1 stalk is quite mobile in the ribosome, and is involved in E site tRNA release. Functionally, protein L1 is also a translational repressor protein, it controls the translation of the L11 operon by binding to its mRNA. The sequence is that of Large ribosomal subunit protein uL1 from Burkholderia lata (strain ATCC 17760 / DSM 23089 / LMG 22485 / NCIMB 9086 / R18194 / 383).